Reading from the N-terminus, the 775-residue chain is DENN domain-containing protein 1B (775 aa).

Residues 14–143 form the uDENN domain; the sequence is DLVLKVKCHA…YNHPVPKANT (130 aa). Positions 180-316 constitute a cDENN domain; the sequence is GLPTIPESRN…VVSALKNKLK (137 aa). The dDENN domain occupies 318 to 395; that stretch reads QSTATGDGVA…DGRLAKLNAG (78 aa). The FXDXF motif signature appears at 398–402; it reads FSDVF. Position 520 is a phosphotyrosine (tyrosine 520). Phosphoserine is present on residues serine 535, serine 536, serine 549, and serine 552. Residues 566-575 carry the Clathrin box motif; sequence DLLGEILDTL. Disordered regions lie at residues 635-654 and 671-706; these read DSAL…VSSS and HLGA…KRET. Residues 639-651 are compositionally biased toward basic residues; it reads HGKHLPPSPRKRV. Residues serine 652 and serine 653 each carry the phosphoserine modification. The span at 695-706 shows a compositional bias: basic and acidic residues; sequence QTDKGKTEKRET.

Interacts with RAB35. Interacts with clathrin heavy chain/CLTC. Interacts with components of the adapter protein complex 2 (AP-2) AP2A2 and AP2B1. Interacts with CD3E. Post-translationally, phosphorylated on serine and/or threonine, possibly regulating the guanine nucleotide exchange factor (GEF) activity. Highly expressed in dendritic and natural killer cells and at lower levels in other myeloid lineage cells and in pituitary. Significantly up-regulated in effector memory T-cells as compared with naive T-cells.

It localises to the cytoplasm. The protein resides in the cytosol. The protein localises to the cytoplasmic vesicle. Its subcellular location is the clathrin-coated vesicle. Guanine nucleotide exchange factor (GEF) for RAB35 that acts as a regulator of T-cell receptor (TCR) internalization in TH2 cells. Acts by promoting the exchange of GDP to GTP, converting inactive GDP-bound RAB35 into its active GTP-bound form. Plays a role in clathrin-mediated endocytosis. Controls cytokine production in TH2 lymphocytes by controlling the rate of TCR internalization and routing to endosomes: acts by mediating clathrin-mediated endocytosis of TCR via its interaction with the adapter protein complex 2 (AP-2) and GEF activity. Dysregulation leads to impaired TCR down-modulation and recycling, affecting cytokine production in TH2 cells. This Homo sapiens (Human) protein is DENN domain-containing protein 1B.